The primary structure comprises 157 residues: Transcriptional repressor NrdR (157 aa).

Residues Cys-3–Cys-34 fold into a zinc finger. The ATP-cone domain maps to Leu-49–Asp-139.

This sequence belongs to the NrdR family. It depends on Zn(2+) as a cofactor.

Functionally, negatively regulates transcription of bacterial ribonucleotide reductase nrd genes and operons by binding to NrdR-boxes. This is Transcriptional repressor NrdR from Caulobacter vibrioides (strain ATCC 19089 / CIP 103742 / CB 15) (Caulobacter crescentus).